A 250-amino-acid chain; its full sequence is Protein lin-28 homolog B (250 aa).

A disordered region spans residues 1 to 26 (MAEGGASKGGGEEPGKLPEPAEEESQ). The CSD domain maps to 29–102 (RGTGHCKWFN…GLESIRVTGP (74 aa)). Phosphoserine occurs at positions 54, 96, 105, and 110. The segment at 98 to 126 (RVTGPGGSPCLGSERRPKGKTLQKRKPKG) is disordered. A Bipartite nuclear localization signal motif is present at residues 112–125 (RRPKGKTLQKRKPK). Residues 114 to 125 (PKGKTLQKRKPK) show a composition bias toward basic residues. 2 CCHC-type zinc fingers span residues 127–144 (DRCY…ECSL) and 149–166 (KKCH…NCPH). C129, C132, H137, C142, C151, C154, H159, and C164 together coordinate Zn(2+). Positions 169–250 (VAQPPASSQG…GPSVQKRKKT (82 aa)) are disordered. Positions 173–191 (PASSQGRQEAESQPCTSTL) are enriched in polar residues. At S203 the chain carries Phosphoserine. Basic and acidic residues predominate over residues 210–219 (ARAEISERSG). The segment covering 220-231 (RSPQEASSTKSS) has biased composition (polar residues). Residues 239–250 (KKGPSVQKRKKT) carry the Nucleolar localization signal motif.

Belongs to the lin-28 family. As to expression, expressed at high levels in the placenta and, at mucher lower, in testis and fetal liver. Isoform 1 is only detected in placenta and in moderately and poorly differentiated hepatocellular carcinoma cells (at protein level). Isoform 2 is detected in fetal liver, non-tumor liver tissues, as well as well-differentiated tumor tissues (at protein level). Tends to be up-regulated in triple-negative (ER-,PR-,HER2-) breast tumors, as well as in liver, ovarian, and thyroid carcinomas.

Its subcellular location is the nucleus. It is found in the nucleolus. The protein resides in the cytoplasm. Functionally, suppressor of microRNA (miRNA) biogenesis, including that of let-7 and possibly of miR107, miR-143 and miR-200c. Binds primary let-7 transcripts (pri-let-7), including pri-let-7g and pri-let-7a-1, and sequester them in the nucleolus, away from the microprocessor complex, hence preventing their processing into mature miRNA. Does not act on pri-miR21. The repression of let-7 expression is required for normal development and contributes to maintain the pluripotent state of embryonic stem cells by preventing let-7-mediated differentiation. When overexpressed, recruits ZCCHC11/TUT4 uridylyltransferase to pre-let-7 transcripts, leading to their terminal uridylation and degradation. This activity might not be relevant in vivo, as LIN28B-mediated inhibition of let-7 miRNA maturation appears to be ZCCHC11-independent. Interaction with target pre-miRNAs occurs via an 5'-GGAG-3' motif in the pre-miRNA terminal loop. Mediates MYC-induced let-7 repression. When overexpressed, isoform 1 stimulates growth of the breast adenocarcinoma cell line MCF-7. Isoform 2 has no effect on cell growth. This Homo sapiens (Human) protein is Protein lin-28 homolog B (LIN28B).